The sequence spans 456 residues: Bifunctional protein GlmU (456 aa).

Positions 1–230 (MDKRFAVILA…FQETLGVNDR (230 aa)) are pyrophosphorylase. UDP-N-acetyl-alpha-D-glucosamine is bound by residues 9–12 (LAAG), lysine 23, glutamine 73, and 78–79 (GT). Residue aspartate 103 coordinates Mg(2+). Glycine 140, glutamate 155, asparagine 170, and asparagine 228 together coordinate UDP-N-acetyl-alpha-D-glucosamine. Asparagine 228 is a Mg(2+) binding site. The linker stretch occupies residues 231-251 (VALSQAEMYMKERINKRHMQN). The N-acetyltransferase stretch occupies residues 252 to 456 (GVTLIDPMNT…EDYVKNIHKK (205 aa)). Arginine 333 and lysine 351 together coordinate UDP-N-acetyl-alpha-D-glucosamine. Histidine 363 serves as the catalytic Proton acceptor. UDP-N-acetyl-alpha-D-glucosamine-binding residues include tyrosine 366 and asparagine 377. Acetyl-CoA is bound by residues 386 to 387 (NY), alanine 423, and arginine 440.

It in the N-terminal section; belongs to the N-acetylglucosamine-1-phosphate uridyltransferase family. This sequence in the C-terminal section; belongs to the transferase hexapeptide repeat family. As to quaternary structure, homotrimer. Requires Mg(2+) as cofactor.

It localises to the cytoplasm. The catalysed reaction is alpha-D-glucosamine 1-phosphate + acetyl-CoA = N-acetyl-alpha-D-glucosamine 1-phosphate + CoA + H(+). It catalyses the reaction N-acetyl-alpha-D-glucosamine 1-phosphate + UTP + H(+) = UDP-N-acetyl-alpha-D-glucosamine + diphosphate. It participates in nucleotide-sugar biosynthesis; UDP-N-acetyl-alpha-D-glucosamine biosynthesis; N-acetyl-alpha-D-glucosamine 1-phosphate from alpha-D-glucosamine 6-phosphate (route II): step 2/2. Its pathway is nucleotide-sugar biosynthesis; UDP-N-acetyl-alpha-D-glucosamine biosynthesis; UDP-N-acetyl-alpha-D-glucosamine from N-acetyl-alpha-D-glucosamine 1-phosphate: step 1/1. The protein operates within bacterial outer membrane biogenesis; LPS lipid A biosynthesis. Functionally, catalyzes the last two sequential reactions in the de novo biosynthetic pathway for UDP-N-acetylglucosamine (UDP-GlcNAc). The C-terminal domain catalyzes the transfer of acetyl group from acetyl coenzyme A to glucosamine-1-phosphate (GlcN-1-P) to produce N-acetylglucosamine-1-phosphate (GlcNAc-1-P), which is converted into UDP-GlcNAc by the transfer of uridine 5-monophosphate (from uridine 5-triphosphate), a reaction catalyzed by the N-terminal domain. This chain is Bifunctional protein GlmU, found in Bacillus velezensis (strain DSM 23117 / BGSC 10A6 / LMG 26770 / FZB42) (Bacillus amyloliquefaciens subsp. plantarum).